A 285-amino-acid polypeptide reads, in one-letter code: MARCO-like protein (285 aa).

The N-terminal stretch at 1-20 (MRAFIFFLFMLLAMFSASST) is a signal peptide. Asn-24 carries an N-linked (GlcNAc...) asparagine glycan. Disordered stretches follow at residues 47–77 (NHLG…GQPG) and 91–285 (GRAG…QGNL). 2 stretches are compositionally biased toward polar residues: residues 57–67 (KQGGSYTQGNP) and 105–114 (SGKSNQKGNP). Positions 115–128 (ESSNKQENSGSSSQ) are enriched in low complexity. Residues 134-145 (ISTQQGNPGSSD) show a composition bias toward polar residues. The span at 160-173 (GSSSQQGKPGSSSQ) shows a compositional bias: low complexity. Polar residues predominate over residues 174–185 (HGNLGSSTQKGN). The span at 186-220 (LGSSSLQGHLGLSSHQGKPESSGQQGKPGSSSQQG) shows a compositional bias: low complexity. Residues 221–285 (NLGTSGQQEK…PGSSSRQGNL (65 aa)) are compositionally biased toward polar residues.

The protein is MARCO-like protein of Homo sapiens (Human).